Consider the following 121-residue polypeptide: ATP synthase epsilon chain (121 aa).

It belongs to the ATPase epsilon chain family. In terms of assembly, F-type ATPases have 2 components, CF(1) - the catalytic core - and CF(0) - the membrane proton channel. CF(1) has five subunits: alpha(3), beta(3), gamma(1), delta(1), epsilon(1). CF(0) has three main subunits: a, b and c.

It is found in the cell membrane. In terms of biological role, produces ATP from ADP in the presence of a proton gradient across the membrane. The polypeptide is ATP synthase epsilon chain (Mycobacterium sp. (strain JLS)).